A 295-amino-acid polypeptide reads, in one-letter code: Tyrosine recombinase XerD (295 aa).

Residues 1–85 (METIIEEYLR…TIRSFHQFAI (85 aa)) enclose the Core-binding (CB) domain. One can recognise a Tyr recombinase domain in the interval 106–289 (KLPDVLNVDE…SKSQIRKMYN (184 aa)). Catalysis depends on residues R146, K170, H241, R244, and H267. Y276 (O-(3'-phospho-DNA)-tyrosine intermediate) is an active-site residue.

It belongs to the 'phage' integrase family. XerD subfamily. Forms a cyclic heterotetrameric complex composed of two molecules of XerC and two molecules of XerD.

Its subcellular location is the cytoplasm. In terms of biological role, site-specific tyrosine recombinase, which acts by catalyzing the cutting and rejoining of the recombining DNA molecules. The XerC-XerD complex is essential to convert dimers of the bacterial chromosome into monomers to permit their segregation at cell division. It also contributes to the segregational stability of plasmids. The chain is Tyrosine recombinase XerD from Staphylococcus aureus (strain COL).